We begin with the raw amino-acid sequence, 213 residues long: Probable GTP-binding protein EngB (213 aa).

One can recognise an EngB-type G domain in the interval 30–204 (SVQSIAFMGR…REFILETLGI (175 aa)). GTP contacts are provided by residues 38–45 (GRSNSGKS), 65–69 (GKTKL), 83–86 (DLPG), 150–153 (TKID), and 183–185 (ISA). Mg(2+)-binding residues include Ser45 and Thr67.

Belongs to the TRAFAC class TrmE-Era-EngA-EngB-Septin-like GTPase superfamily. EngB GTPase family. Mg(2+) serves as cofactor.

Necessary for normal cell division and for the maintenance of normal septation. This Leptospira biflexa serovar Patoc (strain Patoc 1 / Ames) protein is Probable GTP-binding protein EngB.